A 220-amino-acid chain; its full sequence is Thiamine-phosphate synthase (220 aa).

4-amino-2-methyl-5-(diphosphooxymethyl)pyrimidine contacts are provided by residues glutamine 39 to lysine 43 and asparagine 80. Mg(2+) is bound by residues aspartate 81 and aspartate 100. Serine 119 serves as a coordination point for 4-amino-2-methyl-5-(diphosphooxymethyl)pyrimidine. Threonine 145–threonine 147 lines the 2-[(2R,5Z)-2-carboxy-4-methylthiazol-5(2H)-ylidene]ethyl phosphate pocket. Lysine 148 is a binding site for 4-amino-2-methyl-5-(diphosphooxymethyl)pyrimidine. A 2-[(2R,5Z)-2-carboxy-4-methylthiazol-5(2H)-ylidene]ethyl phosphate-binding site is contributed by glycine 176.

The protein belongs to the thiamine-phosphate synthase family. Mg(2+) is required as a cofactor.

It catalyses the reaction 2-[(2R,5Z)-2-carboxy-4-methylthiazol-5(2H)-ylidene]ethyl phosphate + 4-amino-2-methyl-5-(diphosphooxymethyl)pyrimidine + 2 H(+) = thiamine phosphate + CO2 + diphosphate. The enzyme catalyses 2-(2-carboxy-4-methylthiazol-5-yl)ethyl phosphate + 4-amino-2-methyl-5-(diphosphooxymethyl)pyrimidine + 2 H(+) = thiamine phosphate + CO2 + diphosphate. The catalysed reaction is 4-methyl-5-(2-phosphooxyethyl)-thiazole + 4-amino-2-methyl-5-(diphosphooxymethyl)pyrimidine + H(+) = thiamine phosphate + diphosphate. It functions in the pathway cofactor biosynthesis; thiamine diphosphate biosynthesis; thiamine phosphate from 4-amino-2-methyl-5-diphosphomethylpyrimidine and 4-methyl-5-(2-phosphoethyl)-thiazole: step 1/1. Its function is as follows. Condenses 4-methyl-5-(beta-hydroxyethyl)thiazole monophosphate (THZ-P) and 2-methyl-4-amino-5-hydroxymethyl pyrimidine pyrophosphate (HMP-PP) to form thiamine monophosphate (TMP). This Mycobacterium ulcerans (strain Agy99) protein is Thiamine-phosphate synthase.